The primary structure comprises 179 residues: Small ribosomal subunit protein uS5 (179 aa).

In terms of domain architecture, S5 DRBM spans 22-85 (MIEKLVAVNR…EYARKTMANV (64 aa)).

This sequence belongs to the universal ribosomal protein uS5 family. In terms of assembly, part of the 30S ribosomal subunit. Contacts proteins S4 and S8.

With S4 and S12 plays an important role in translational accuracy. Functionally, located at the back of the 30S subunit body where it stabilizes the conformation of the head with respect to the body. This Xylella fastidiosa (strain 9a5c) protein is Small ribosomal subunit protein uS5.